The following is a 96-amino-acid chain: uncharacterized protein (96 aa).

This is an uncharacterized protein from Methanocaldococcus jannaschii (strain ATCC 43067 / DSM 2661 / JAL-1 / JCM 10045 / NBRC 100440) (Methanococcus jannaschii).